The chain runs to 352 residues: Sperm equatorial segment protein 1 (352 aa).

Residues Met-1–Ala-19 form the signal peptide. The N-linked (GlcNAc...) asparagine glycan is linked to Asn-128. The segment at Ile-140–Ser-203 is disordered. The segment covering Thr-166–Ser-193 has biased composition (polar residues).

Belongs to the SPESP1 family. Post-translationally, glycosylated. In testis there are two predominant forms of 77- and 67-kDa and a form of 47-kDa, whereas in epididymal sperm from caput, corpus, and cauda there are two forms of 47- and 43-kDa. Testis forms contain complex carbohydrate residues. Epididymal sperm forms are N-glycosylated. Then undergoes significant glycosylation in the testis and that the majority of these glycoconjugates are removed by the time sperm reach the caput epididymis.

It is found in the cytoplasmic vesicle. Its subcellular location is the secretory vesicle. It localises to the acrosome. Functionally, involved in fertilization ability of sperm. The polypeptide is Sperm equatorial segment protein 1 (Macaca fascicularis (Crab-eating macaque)).